We begin with the raw amino-acid sequence, 157 residues long: Glycine-rich RNA-binding, abscisic acid-inducible protein (157 aa).

Positions 8–86 (YRCFVGGLAW…RNITVNQAQS (79 aa)) constitute an RRM domain. The interval 82 to 157 (NQAQSRGGGG…YGGGGGGWRD (76 aa)) is disordered. The span at 87-157 (RGGGGGGGGY…YGGGGGGWRD (71 aa)) shows a compositional bias: gly residues.

Functionally, possibly has a role in RNA transcription or processing during stress. The polypeptide is Glycine-rich RNA-binding, abscisic acid-inducible protein (RAB15) (Zea mays (Maize)).